A 204-amino-acid polypeptide reads, in one-letter code: Large ribosomal subunit protein eL15 (204 aa).

It belongs to the eukaryotic ribosomal protein eL15 family. Component of the large ribosomal subunit.

It localises to the cytoplasm. In terms of biological role, component of the large ribosomal subunit. The ribosome is a large ribonucleoprotein complex responsible for the synthesis of proteins in the cell. In Cyprinus carpio (Common carp), this protein is Large ribosomal subunit protein eL15 (rpl15).